A 493-amino-acid chain; its full sequence is MESGEHDSETMYEPYIPPIINKVNTILRSHCRQCVLDLIFKKIKEENVHCYGDYVRYMLIGYDSNRIRVRFKSEFQATFFRKQLEIYLSVKNYGDYEDSNCSTMRVRPKYSNKYFRNFILSNEYIMKLFEQIHQSRTSYLLNKLRKQFKKTRFYLEFYYETSLNYTNYEYIPVNCDFDVDTLMVDKQIYEKPNPEDFIVINPKCKVENVINNINNMQFIILTKNGSPLIQHYSEDIVTGNYDDDYYKFYLDELMGRSHCIDRYSASGKRILSRKEIMEDEGWVCINLPCPNQNCVLFENTIGICCDNDETVSSNSLNMVNFGPDDKNSATNPTHLSKESQNNSESNSESITESPLNSFIQRSGNREDSEISQDNDTVQIDKSTSSDSVHNYFDNSVDNSVHDSVHDSVDTIGQTRRDNASTNRPLYSEYDNFLRTTMDTIKTVYQKKIFDGDSDKIKHSRFSVNQIYDRVEYTDNHDCHDHHDSEISTNNIFG.

Positions 316–403 (LNMVNFGPDD…NSVDNSVHDS (88 aa)) are disordered. The span at 338–353 (ESQNNSESNSESITES) shows a compositional bias: low complexity. Polar residues predominate over residues 371–398 (SQDNDTVQIDKSTSSDSVHNYFDNSVDN).

It belongs to the mimivirus R69 family.

This is an uncharacterized protein from Acanthamoeba polyphaga (Amoeba).